Consider the following 757-residue polypeptide: Relaxin receptor 1 (757 aa).

The Extracellular segment spans residues M1–R409. The LDL-receptor class A domain occupies K26–G63. 3 cysteine pairs are disulfide-bonded: C27–C40, C34–C53, and C47–C62. N36 carries N-linked (GlcNAc...) asparagine glycosylation. Positions 45, 48, 50, 52, 58, and 59 each coordinate Ca(2+). Residues E91–N127 enclose the LRRNT domain. N127 is a glycosylation site (N-linked (GlcNAc...) asparagine). LRR repeat units lie at residues D151–G172, S175–D196, R199–G220, S223–Q244, R248–S269, N272–P293, K296–D317, E320–Y341, and K344–P365. N-linked (GlcNAc...) asparagine glycans are attached at residues N264 and N272. N325 carries N-linked (GlcNAc...) asparagine glycosylation. N-linked (GlcNAc...) asparagine glycosylation is present at N368. A helical membrane pass occupies residues V410–R430. At P431–S443 the chain is on the cytoplasmic side. A helical membrane pass occupies residues I444 to F464. Residues D465 to Q486 lie on the Extracellular side of the membrane. Residues C485 and C563 are joined by a disulfide bond. The helical transmembrane segment at L487 to T507 threads the bilayer. The Cytoplasmic portion of the chain corresponds to L508–R527. A helical transmembrane segment spans residues T528–S548. Residues N549 to Q577 are Extracellular-facing. The chain crosses the membrane as a helical span at residues I578 to S598. The Cytoplasmic segment spans residues Y599–R629. The helical transmembrane segment at F630–L650 threads the bilayer. Position 651 (S651) is a topological domain, extracellular. The chain crosses the membrane as a helical span at residues L652–I672. Residues N673–S757 are Cytoplasmic-facing.

This sequence belongs to the G-protein coupled receptor 1 family. Interacts with C1QTNF8. In terms of tissue distribution, expressed in the brain, kidney, testis, placenta, uterus, ovary, adrenal, prostate, skin and heart. Not detected in spleen.

It is found in the cell membrane. Functionally, receptor for relaxins. The activity of this receptor is mediated by G proteins leading to stimulation of adenylate cyclase and an increase of cAMP. Binding of the ligand may also activate a tyrosine kinase pathway that inhibits the activity of a phosphodiesterase that degrades cAMP. The chain is Relaxin receptor 1 (RXFP1) from Homo sapiens (Human).